Consider the following 423-residue polypeptide: AP-1 complex subunit mu-1 (423 aa).

Serine 2 is modified (N-acetylserine). Residues threonine 152, threonine 154, and threonine 223 each carry the phosphothreonine modification. Residues 168–421 enclose the MHD domain; it reads KNEVFLDVIE…ITQNGDYQLR (254 aa).

The protein belongs to the adaptor complexes medium subunit family. In terms of assembly, adaptor protein complex 1 (AP-1) is a heterotetramer composed of two large adaptins (gamma-type subunit AP1G1 and beta-type subunit AP1B1), a medium adaptin (mu-type subunit AP1M1 or AP1M2) and a small adaptin (sigma-type subunit AP1S1 or AP1S2 or AP1S3). Interacts with MARCHF11. Post-translationally, phosphorylation of membrane-bound AP1M1/AP1M2 increases its affinity for sorting signals.

Its subcellular location is the cytoplasmic vesicle. It localises to the clathrin-coated vesicle membrane. The protein resides in the golgi apparatus. In terms of biological role, subunit of clathrin-associated adaptor protein complex 1 that plays a role in protein sorting in the trans-Golgi network (TGN) and endosomes. The AP complexes mediate the recruitment of clathrin to membranes and the recognition of sorting signals within the cytosolic tails of transmembrane cargo molecules. The sequence is that of AP-1 complex subunit mu-1 from Rattus norvegicus (Rat).